Reading from the N-terminus, the 343-residue chain is Ribosomal RNA small subunit methyltransferase C (343 aa).

The protein belongs to the methyltransferase superfamily. RsmC family. As to quaternary structure, monomer.

The protein localises to the cytoplasm. It catalyses the reaction guanosine(1207) in 16S rRNA + S-adenosyl-L-methionine = N(2)-methylguanosine(1207) in 16S rRNA + S-adenosyl-L-homocysteine + H(+). In terms of biological role, specifically methylates the guanine in position 1207 of 16S rRNA in the 30S particle. The polypeptide is Ribosomal RNA small subunit methyltransferase C (Escherichia coli O81 (strain ED1a)).